A 179-amino-acid chain; its full sequence is Large ribosomal subunit protein uL5 (179 aa).

It belongs to the universal ribosomal protein uL5 family. Part of the 50S ribosomal subunit; part of the 5S rRNA/L5/L18/L25 subcomplex. Contacts the 5S rRNA and the P site tRNA. Forms a bridge to the 30S subunit in the 70S ribosome.

Functionally, this is one of the proteins that bind and probably mediate the attachment of the 5S RNA into the large ribosomal subunit, where it forms part of the central protuberance. In the 70S ribosome it contacts protein S13 of the 30S subunit (bridge B1b), connecting the 2 subunits; this bridge is implicated in subunit movement. Contacts the P site tRNA; the 5S rRNA and some of its associated proteins might help stabilize positioning of ribosome-bound tRNAs. The protein is Large ribosomal subunit protein uL5 of Geobacillus sp. (strain WCH70).